The sequence spans 101 residues: Small ribosomal subunit protein uS14 (101 aa).

It belongs to the universal ribosomal protein uS14 family. Part of the 30S ribosomal subunit. Contacts proteins S3 and S10.

In terms of biological role, binds 16S rRNA, required for the assembly of 30S particles and may also be responsible for determining the conformation of the 16S rRNA at the A site. In Orientia tsutsugamushi (strain Boryong) (Rickettsia tsutsugamushi), this protein is Small ribosomal subunit protein uS14.